Here is a 369-residue protein sequence, read N- to C-terminus: Histidinol-phosphate aminotransferase 2 (369 aa).

An N6-(pyridoxal phosphate)lysine modification is found at lysine 227.

The protein belongs to the class-II pyridoxal-phosphate-dependent aminotransferase family. Histidinol-phosphate aminotransferase subfamily. As to quaternary structure, homodimer. Pyridoxal 5'-phosphate is required as a cofactor.

The catalysed reaction is L-histidinol phosphate + 2-oxoglutarate = 3-(imidazol-4-yl)-2-oxopropyl phosphate + L-glutamate. It functions in the pathway amino-acid biosynthesis; L-histidine biosynthesis; L-histidine from 5-phospho-alpha-D-ribose 1-diphosphate: step 7/9. The protein is Histidinol-phosphate aminotransferase 2 (hisC2) of Mesorhizobium japonicum (strain LMG 29417 / CECT 9101 / MAFF 303099) (Mesorhizobium loti (strain MAFF 303099)).